The sequence spans 185 residues: Ribose 1,5-bisphosphate phosphokinase PhnN (185 aa).

10–17 provides a ligand contact to ATP; the sequence is GPSGSGKD.

The protein belongs to the ribose 1,5-bisphosphokinase family.

The catalysed reaction is alpha-D-ribose 1,5-bisphosphate + ATP = 5-phospho-alpha-D-ribose 1-diphosphate + ADP. It functions in the pathway metabolic intermediate biosynthesis; 5-phospho-alpha-D-ribose 1-diphosphate biosynthesis; 5-phospho-alpha-D-ribose 1-diphosphate from D-ribose 5-phosphate (route II): step 3/3. In terms of biological role, catalyzes the phosphorylation of ribose 1,5-bisphosphate to 5-phospho-D-ribosyl alpha-1-diphosphate (PRPP). This is Ribose 1,5-bisphosphate phosphokinase PhnN from Shigella dysenteriae serotype 1 (strain Sd197).